The sequence spans 602 residues: Translation initiation factor IF-2 (602 aa).

One can recognise a tr-type G domain in the interval 112-281 (KRAPIITIMG…LLLCEVLDLK (170 aa)). The interval 121-128 (GHVDHGKT) is G1. GTP is bound at residue 121–128 (GHVDHGKT). Residues 146 to 150 (GITQH) form a G2 region. Positions 167-170 (DTPG) are G3. Residues 167–171 (DTPGH) and 221–224 (NKMD) contribute to the GTP site. The tract at residues 221-224 (NKMD) is G4. Positions 257 to 259 (SAL) are G5.

It belongs to the TRAFAC class translation factor GTPase superfamily. Classic translation factor GTPase family. IF-2 subfamily.

It is found in the cytoplasm. Its function is as follows. One of the essential components for the initiation of protein synthesis. Protects formylmethionyl-tRNA from spontaneous hydrolysis and promotes its binding to the 30S ribosomal subunits. Also involved in the hydrolysis of GTP during the formation of the 70S ribosomal complex. The protein is Translation initiation factor IF-2 of Mycoplasmopsis synoviae (strain 53) (Mycoplasma synoviae).